We begin with the raw amino-acid sequence, 246 residues long: MESIFGGFGDLVVPRPKEHLGQTDLSFGGKLLPALKICEDGGESGCGGKVWIAGELLCEYILEKSVDHLLSKTVNGTKQFKKVLELGSGTGLVGLCVGLLEKNTFHDGTKVYVTDIDKLIPLLKRNIELDEVQYEVLARELWWGEPLSADFSPQEGAMQANNVDLVLAADCVYLEEAFPLLEKTLLDLTHCINPPVILMAYKKRRKADKHFFNKIKRNFDVLEITDFSKFEHYLKERTHLFQLIRK.

S-adenosyl-L-methionine is bound by residues Trp51, Gly87–Gly89, Asp115, Trp143, and Ala169.

This sequence belongs to the class I-like SAM-binding methyltransferase superfamily. METTL21 family. EFM6 subfamily.

It localises to the cytoplasm. In terms of biological role, S-adenosyl-L-methionine-dependent protein-lysine N-methyltransferase that methylates elongation factor 1-alpha (TEF1 and TEF2) at 'Lys-390'. The protein is Protein-lysine N-methyltransferase EFM6 of Saccharomyces cerevisiae (strain ATCC 204508 / S288c) (Baker's yeast).